The sequence spans 86 residues: Neurotoxin 8-related gene product 1/2/3 (86 aa).

A signal peptide spans 1-19; the sequence is MNYLTMISLALLVMTGVES. Residues 22–84 enclose the LCN-type CS-alpha/beta domain; the sequence is RDAYIADNKN…VPIKVPGKCN (63 aa). Intrachain disulfides connect C32/C83, C36/C56, C42/C66, and C46/C68. Asparagine amide is present on N84.

The protein belongs to the long (4 C-C) scorpion toxin superfamily. Sodium channel inhibitor family. Alpha subfamily. In terms of tissue distribution, expressed by the venom gland.

It localises to the secreted. Binds voltage-dependently at site-3 of sodium channels (Nav) and inhibits the inactivation of the activated channels, thereby blocking neuronal transmission. This is Neurotoxin 8-related gene product 1/2/3 (NTVIIIrgp1) from Androctonus mauritanicus mauritanicus (Scorpion).